The primary structure comprises 158 residues: Ribosome maturation factor RimP (158 aa).

It belongs to the RimP family.

It is found in the cytoplasm. Its function is as follows. Required for maturation of 30S ribosomal subunits. This chain is Ribosome maturation factor RimP, found in Streptococcus suis (strain 05ZYH33).